A 216-amino-acid polypeptide reads, in one-letter code: uncharacterized protein (216 aa).

The helical transmembrane segment at 7–29 (ILVIFFLIFFIGFEFSDMTLAFI) threads the bilayer.

It is found in the membrane. This is an uncharacterized protein from Archaeoglobus fulgidus (strain ATCC 49558 / DSM 4304 / JCM 9628 / NBRC 100126 / VC-16).